A 287-amino-acid polypeptide reads, in one-letter code: Acetylglutamate kinase (287 aa).

Substrate contacts are provided by residues 70–71 (GG), R92, and N184.

This sequence belongs to the acetylglutamate kinase family. ArgB subfamily.

The protein localises to the cytoplasm. The enzyme catalyses N-acetyl-L-glutamate + ATP = N-acetyl-L-glutamyl 5-phosphate + ADP. Its pathway is amino-acid biosynthesis; L-arginine biosynthesis; N(2)-acetyl-L-ornithine from L-glutamate: step 2/4. Functionally, catalyzes the ATP-dependent phosphorylation of N-acetyl-L-glutamate. The sequence is that of Acetylglutamate kinase from Ruegeria pomeroyi (strain ATCC 700808 / DSM 15171 / DSS-3) (Silicibacter pomeroyi).